The following is a 303-amino-acid chain: MKNLLSMEALTVHEIEHLLEQAAQFKHGKKATLKEQAFAVNMFFEPSTRTHTSFEVAEKKLGVEVVSFDAATSSMTKGETLYDTLLTMEAVGVNVAVIRHSEENYYAGLDKLNIAIVNGGDGCGEHPSQSLLDLFTIKEQFGTFQDLKVAIAGDIRHSRVANSNMKVLKRLGAKLFFSGPKEWFDDSYLEYGTYLPVDEIVEKVDVMMLLRVQHERHSGTEQFTKASYHEKFGLTVERAAKLKQDAIIMHPSPVNRDVEIADSLVESEKSRIVTQMTNGVFIRMAILESILKEQEMRAKVCTY.

2 residues coordinate carbamoyl phosphate: Arg-49 and Thr-50. Lys-77 provides a ligand contact to L-aspartate. 3 residues coordinate carbamoyl phosphate: Arg-99, His-126, and Gln-129. L-aspartate is bound by residues Arg-159 and Arg-211. Carbamoyl phosphate is bound by residues Ser-252 and Pro-253.

Belongs to the aspartate/ornithine carbamoyltransferase superfamily. ATCase family. Heterododecamer (2C3:3R2) of six catalytic PyrB chains organized as two trimers (C3), and six regulatory PyrI chains organized as three dimers (R2).

It catalyses the reaction carbamoyl phosphate + L-aspartate = N-carbamoyl-L-aspartate + phosphate + H(+). It functions in the pathway pyrimidine metabolism; UMP biosynthesis via de novo pathway; (S)-dihydroorotate from bicarbonate: step 2/3. In terms of biological role, catalyzes the condensation of carbamoyl phosphate and aspartate to form carbamoyl aspartate and inorganic phosphate, the committed step in the de novo pyrimidine nucleotide biosynthesis pathway. The sequence is that of Aspartate carbamoyltransferase catalytic subunit from Listeria innocua serovar 6a (strain ATCC BAA-680 / CLIP 11262).